The chain runs to 207 residues: Guanylate kinase (207 aa).

Residues 7–185 form the Guanylate kinase-like domain; sequence GIVLVLCAPS…AYDELRAAYI (179 aa). 14–21 is an ATP binding site; it reads APSGTGKT.

It belongs to the guanylate kinase family.

Its subcellular location is the cytoplasm. It carries out the reaction GMP + ATP = GDP + ADP. Functionally, essential for recycling GMP and indirectly, cGMP. This is Guanylate kinase from Nitratidesulfovibrio vulgaris (strain ATCC 29579 / DSM 644 / CCUG 34227 / NCIMB 8303 / VKM B-1760 / Hildenborough) (Desulfovibrio vulgaris).